A 263-amino-acid chain; its full sequence is Uroporphyrinogen-III C-methyltransferase (263 aa).

Residues P20, 96-98 (GGD), 126-127 (TA), M180, and A237 each bind S-adenosyl-L-homocysteine.

It belongs to the precorrin methyltransferase family.

The catalysed reaction is uroporphyrinogen III + 2 S-adenosyl-L-methionine = precorrin-2 + 2 S-adenosyl-L-homocysteine + H(+). It participates in cofactor biosynthesis; adenosylcobalamin biosynthesis; precorrin-2 from uroporphyrinogen III: step 1/1. Its pathway is porphyrin-containing compound metabolism; siroheme biosynthesis; precorrin-2 from uroporphyrinogen III: step 1/1. Its function is as follows. Catalyzes the two successive C-2 and C-7 methylation reactions involved in the conversion of uroporphyrinogen III to precorrin-2 via the intermediate formation of precorrin-1. It is a step in the biosynthesis of both cobalamin (vitamin B12) and siroheme. This chain is Uroporphyrinogen-III C-methyltransferase (cobA), found in Synechocystis sp. (strain ATCC 27184 / PCC 6803 / Kazusa).